Here is a 126-residue protein sequence, read N- to C-terminus: Protein ApaG (126 aa).

One can recognise an ApaG domain in the interval 2–126 (DVSQPRIQIQ…FRLAVPNILN (125 aa)).

The protein is Protein ApaG of Vibrio vulnificus (strain CMCP6).